Consider the following 68-residue polypeptide: Large ribosomal subunit protein bL31 (68 aa).

Zn(2+) contacts are provided by cysteine 17, cysteine 19, cysteine 37, and cysteine 40.

Belongs to the bacterial ribosomal protein bL31 family. Type A subfamily. Part of the 50S ribosomal subunit. Requires Zn(2+) as cofactor.

In terms of biological role, binds the 23S rRNA. The polypeptide is Large ribosomal subunit protein bL31 (Dehalococcoides mccartyi (strain ATCC BAA-2266 / KCTC 15142 / 195) (Dehalococcoides ethenogenes (strain 195))).